Here is a 94-residue protein sequence, read N- to C-terminus: Putative pterin-4-alpha-carbinolamine dehydratase (94 aa).

Belongs to the pterin-4-alpha-carbinolamine dehydratase family.

It catalyses the reaction (4aS,6R)-4a-hydroxy-L-erythro-5,6,7,8-tetrahydrobiopterin = (6R)-L-erythro-6,7-dihydrobiopterin + H2O. In Mycobacteroides abscessus (strain ATCC 19977 / DSM 44196 / CCUG 20993 / CIP 104536 / JCM 13569 / NCTC 13031 / TMC 1543 / L948) (Mycobacterium abscessus), this protein is Putative pterin-4-alpha-carbinolamine dehydratase.